We begin with the raw amino-acid sequence, 49 residues long: Small, acid-soluble spore protein O (49 aa).

Positions 1-49 (MVKRKANHVIPGMNDASAQGKGAGYNEELSNEPLTEAQKQNNKKRKKNQ) are disordered.

Belongs to the SspO family.

It is found in the spore core. This is Small, acid-soluble spore protein O from Anoxybacillus flavithermus (strain DSM 21510 / WK1).